An 80-amino-acid chain; its full sequence is Raniseptin-4 (80 aa).

The N-terminal stretch at 1 to 22 (MAFLKKSLFLVLFLGIVSLSIC) is a signal peptide. Positions 23–49 (EEEKREGEEEEKQEEENEELSEEELRD) are excised as a propeptide.

This sequence belongs to the frog skin active peptide (FSAP) family. Dermaseptin subfamily. Expressed by the skin glands.

It is found in the secreted. Functionally, has antibacterial activity. This is Raniseptin-4 from Boana raniceps (Chaco tree frog).